Reading from the N-terminus, the 86-residue chain is Cell division topological specificity factor (86 aa).

Belongs to the MinE family.

In terms of biological role, prevents the cell division inhibition by proteins MinC and MinD at internal division sites while permitting inhibition at polar sites. This ensures cell division at the proper site by restricting the formation of a division septum at the midpoint of the long axis of the cell. The polypeptide is Cell division topological specificity factor (Albidiferax ferrireducens (strain ATCC BAA-621 / DSM 15236 / T118) (Rhodoferax ferrireducens)).